The following is a 370-amino-acid chain: Cyanuric acid amidohydrolase (370 aa).

The RU A stretch occupies residues 1–103; sequence MQAQVFRVPM…TIFTVQKTDN (103 aa). Substrate contacts are provided by residues R51 and 82–83; that span reads SG. Residues 113 to 250 form an RU B region; it reads RLAVQQIFTR…NEIIVMGNSR (138 aa). The active site involves K163. Substrate contacts are provided by residues R195 and 233–234; that span reads SA. The active-site Nucleophile is the S233. Residues 256 to 370 form an RU C region; that stretch reads LVIGHAEMKD…GPVAVIARTA (115 aa). E303 provides a ligand contact to Mg(2+). Residues R330 and 349–350 each bind substrate; that span reads SG. Positions 352, 355, 356, 357, and 360 each coordinate Mg(2+).

This sequence belongs to the cyclic amide hydrolase (CyAH) family. As to quaternary structure, homotetramer.

The catalysed reaction is cyanurate + H2O = 1-carboxybiuret + H(+). Its pathway is xenobiotic degradation; atrazine degradation; biuret from cyanurate: step 1/1. Its activity is regulated as follows. Inhibited by barbituric acid. Functionally, responsible for the hydrolysis of cyanuric acid, an intermediate formed during catabolism of s-triazine based compounds in herbicides such as atrazine and polymers such as melamine. Catalyzes the hydrolytic opening of the s-triazine ring of cyanuric acid (2,4,6-trihydroxy-s-triazine) to yield carbon dioxide and carboxybiuret, which spontaneously decarboxylates to biuret. The chain is Cyanuric acid amidohydrolase (trzD) from Pseudomonas sp.